The chain runs to 415 residues: Tyrosine--tRNA ligase (415 aa).

L-tyrosine is bound at residue Tyr34. Positions 39–48 match the 'HIGH' region motif; the sequence is PSADSLHLGN. Tyr162 and Gln166 together coordinate L-tyrosine. Positions 224 to 228 match the 'KMSKS' region motif; that stretch reads KFGKS. An ATP-binding site is contributed by Lys227. The region spanning 346–413 is the S4 RNA-binding domain; the sequence is IKIIDLLNLA…KRNYFLIVWN (68 aa).

This sequence belongs to the class-I aminoacyl-tRNA synthetase family. TyrS type 1 subfamily. Homodimer.

It localises to the cytoplasm. The catalysed reaction is tRNA(Tyr) + L-tyrosine + ATP = L-tyrosyl-tRNA(Tyr) + AMP + diphosphate + H(+). Catalyzes the attachment of tyrosine to tRNA(Tyr) in a two-step reaction: tyrosine is first activated by ATP to form Tyr-AMP and then transferred to the acceptor end of tRNA(Tyr). This chain is Tyrosine--tRNA ligase, found in Ureaplasma urealyticum serovar 10 (strain ATCC 33699 / Western).